Reading from the N-terminus, the 3187-residue chain is Cilia- and flagella-associated protein 47 (3187 aa).

The region spanning 1746–1869 (SDSERILLSW…LCVYMYERLP (124 aa)) is the Calponin-homology (CH) domain. The disordered stretch occupies residues 2024 to 2052 (KLTESRQYPKHDDDMSSSGSDTDQGCSDS). The segment covering 2026 to 2037 (TESRQYPKHDDD) has biased composition (basic and acidic residues).

As to quaternary structure, interacts with CFAP65. As to expression, highly expressed in spermatzoa (at protein level).

It localises to the cytoplasm. The protein localises to the cytoskeleton. It is found in the flagellum basal body. In terms of biological role, plays a role in flagellar formation and sperm motility. The sequence is that of Cilia- and flagella-associated protein 47 from Homo sapiens (Human).